A 96-amino-acid polypeptide reads, in one-letter code: DNA-directed RNA polymerase subunit Rpo11 (96 aa).

Belongs to the archaeal Rpo11/eukaryotic RPB11/RPC19 RNA polymerase subunit family. As to quaternary structure, part of the RNA polymerase complex.

Its subcellular location is the cytoplasm. The enzyme catalyses RNA(n) + a ribonucleoside 5'-triphosphate = RNA(n+1) + diphosphate. In terms of biological role, DNA-dependent RNA polymerase (RNAP) catalyzes the transcription of DNA into RNA using the four ribonucleoside triphosphates as substrates. The sequence is that of DNA-directed RNA polymerase subunit Rpo11 from Nanoarchaeum equitans (strain Kin4-M).